The following is a 116-amino-acid chain: U16-barytoxin-Tl1c (116 aa).

An N-terminal signal peptide occupies residues 1 to 20 (MKTIIVFLSLLVLATKFGDA). Positions 21–76 (NEGVNQEQMKEVIQNEFREDFLNEMAPMSLLQQLEAIESTLLEKEADRNSRQKRCN) are excised as a propeptide. 3 disulfide bridges follow: Cys-75/Cys-90, Cys-82/Cys-95, and Cys-89/Cys-110.

Belongs to the neurotoxin 14 (magi-1) family. 06 (ICK-Trit) subfamily. Expressed by the venom gland.

Its subcellular location is the secreted. Its function is as follows. Ion channel inhibitor. This chain is U16-barytoxin-Tl1c, found in Trittame loki (Brush-footed trapdoor spider).